Here is a 149-residue protein sequence, read N- to C-terminus: Histone H2A (149 aa).

The segment covering 1–23 (METAGKAKKGFGGRKGGPRKKSV) has biased composition (basic residues). Disordered stretches follow at residues 1-25 (META…SVTR) and 127-149 (KTAE…PKKA). Residues 127-138 (KTAEKAAKEPKS) show a composition bias toward basic and acidic residues. 2 short sequence motifs (SPKK motif) span residues 138–141 (SPSK) and 145–148 (SPKK).

This sequence belongs to the histone H2A family. In terms of assembly, the nucleosome is a histone octamer containing two molecules each of H2A, H2B, H3 and H4 assembled in one H3-H4 heterotetramer and two H2A-H2B heterodimers. The octamer wraps approximately 147 bp of DNA.

The protein resides in the nucleus. It is found in the chromosome. In terms of biological role, core component of nucleosome. Nucleosomes wrap and compact DNA into chromatin, limiting DNA accessibility to the cellular machineries which require DNA as a template. Histones thereby play a central role in transcription regulation, DNA repair, DNA replication and chromosomal stability. DNA accessibility is regulated via a complex set of post-translational modifications of histones, also called histone code, and nucleosome remodeling. The sequence is that of Histone H2A from Petroselinum crispum (Parsley).